The following is a 1053-amino-acid chain: Probable sucrose-phosphate synthase (1053 aa).

The span at 103 to 115 (RRQERERGRREAV) shows a compositional bias: basic and acidic residues. Disordered regions lie at residues 103 to 127 (RRQERERGRREAVADMSEDLSEGEK) and 673 to 693 (LRSIDDDDENSETDSPSDSLR).

This sequence belongs to the glycosyltransferase 1 family. As to quaternary structure, homodimer or homotetramer.

It catalyses the reaction beta-D-fructose 6-phosphate + UDP-alpha-D-glucose = sucrose 6(F)-phosphate + UDP + H(+). It functions in the pathway glycan biosynthesis; sucrose biosynthesis; sucrose from D-fructose 6-phosphate and UDP-alpha-D-glucose: step 1/2. Its activity is regulated as follows. Activity is regulated by phosphorylation and moderated by concentration of metabolites and light. Its function is as follows. Plays a role in photosynthetic sucrose synthesis by catalyzing the rate-limiting step of sucrose biosynthesis from UDP-glucose and fructose- 6-phosphate. Involved in the regulation of carbon partitioning in the leaves of plants. May regulate the synthesis of sucrose and therefore play a major role as a limiting factor in the export of photoassimilates out of the leaf. Plays a role for sucrose availability that is essential for plant growth and fiber elongation. This is Probable sucrose-phosphate synthase (SPS) from Solanum tuberosum (Potato).